A 228-amino-acid polypeptide reads, in one-letter code: Ephrin-A5 (228 aa).

An N-terminal signal peptide occupies residues 1–20; it reads MLHVEMLTLLFLVLWMCVFS. Residues 29–162 enclose the Ephrin RBD domain; sequence ADRYAVYWNS…KLKVFVRPTN (134 aa). Residue Asn-37 is glycosylated (N-linked (GlcNAc...) asparagine). Cystine bridges form between Cys-62–Cys-102 and Cys-90–Cys-151. Residues 186–205 form a disordered region; it reads EPADDTVHESAEPSRGENAA. The segment covering 190–200 has biased composition (basic and acidic residues); the sequence is DTVHESAEPSR. The GPI-anchor amidated asparagine moiety is linked to residue Asn-203. Residues 204-228 constitute a propeptide, removed in mature form; that stretch reads AAQTPRIPSRLLAILLFLLAMLLTL.

Belongs to the ephrin family. In terms of assembly, binds to the receptor tyrosine kinases EPHA2, EPHA3, EPHB1 and EPHB2. Interacts with EPHA8; activates EPHA8. Forms a ternary EFNA5-EPHA3-ADAM10 complex mediating EFNA5 extracellular domain shedding by ADAM10 which regulates the EFNA5-EPHA3 complex internalization and function. Expressed in brain, heart, placenta and lung.

The protein resides in the cell membrane. It localises to the membrane. Its subcellular location is the caveola. Functionally, cell surface GPI-bound ligand for Eph receptors, a family of receptor tyrosine kinases which are crucial for migration, repulsion and adhesion during neuronal, vascular and epithelial development. Binds promiscuously Eph receptors residing on adjacent cells, leading to contact-dependent bidirectional signaling into neighboring cells. The signaling pathway downstream of the receptor is referred to as forward signaling while the signaling pathway downstream of the ephrin ligand is referred to as reverse signaling. Induces compartmentalized signaling within a caveolae-like membrane microdomain when bound to the extracellular domain of its cognate receptor. This signaling event requires the activity of the Fyn tyrosine kinase. Activates the EPHA3 receptor to regulate cell-cell adhesion and cytoskeletal organization. With the receptor EPHA2 may regulate lens fiber cells shape and interactions and be important for lens transparency maintenance. May function actively to stimulate axon fasciculation. The interaction of EFNA5 with EPHA5 also mediates communication between pancreatic islet cells to regulate glucose-stimulated insulin secretion. Cognate/functional ligand for EPHA7, their interaction regulates brain development modulating cell-cell adhesion and repulsion. This is Ephrin-A5 (Efna5) from Rattus norvegicus (Rat).